Reading from the N-terminus, the 190-residue chain is Protein FAM210B, mitochondrial (190 aa).

The transit peptide at M1–C58 directs the protein to the mitochondrion. A compositionally biased stretch (basic and acidic residues) spans G56–R66. The tract at residues G56 to L81 is disordered. The region spanning E78 to K189 is the DUF1279 domain. Transmembrane regions (helical) follow at residues V97–V117 and F148–V168.

Belongs to the FAM210 family. Expressed in late erythroblast differentiation stages.

Its subcellular location is the mitochondrion. The protein localises to the mitochondrion outer membrane. Plays a role in erythroid differentiation. Involved in cell proliferation and tumor cell growth suppression. Involved in the metabolic reprogramming of cancer cells in a PDK4-dependent manner. The protein is Protein FAM210B, mitochondrial of Mus musculus (Mouse).